We begin with the raw amino-acid sequence, 424 residues long: Serine--tRNA ligase (424 aa).

232–234 (TAE) contributes to the L-serine binding site. Residue 263 to 265 (RQE) participates in ATP binding. Position 286 (Glu286) interacts with L-serine. 350–353 (EIGS) provides a ligand contact to ATP. Ser386 lines the L-serine pocket.

Belongs to the class-II aminoacyl-tRNA synthetase family. Type-1 seryl-tRNA synthetase subfamily. In terms of assembly, homodimer. The tRNA molecule binds across the dimer.

Its subcellular location is the cytoplasm. The catalysed reaction is tRNA(Ser) + L-serine + ATP = L-seryl-tRNA(Ser) + AMP + diphosphate + H(+). It catalyses the reaction tRNA(Sec) + L-serine + ATP = L-seryl-tRNA(Sec) + AMP + diphosphate + H(+). It functions in the pathway aminoacyl-tRNA biosynthesis; selenocysteinyl-tRNA(Sec) biosynthesis; L-seryl-tRNA(Sec) from L-serine and tRNA(Sec): step 1/1. In terms of biological role, catalyzes the attachment of serine to tRNA(Ser). Is also able to aminoacylate tRNA(Sec) with serine, to form the misacylated tRNA L-seryl-tRNA(Sec), which will be further converted into selenocysteinyl-tRNA(Sec). The sequence is that of Serine--tRNA ligase from Onion yellows phytoplasma (strain OY-M).